The sequence spans 292 residues: Acetyl-coenzyme A carboxylase carboxyl transferase subunit beta (292 aa).

The region spanning 29–292 is the CoA carboxyltransferase N-terminal domain; the sequence is LWSKCPECGQ…HGCESRVASS (264 aa). Residues Cys-33, Cys-36, Cys-52, and Cys-55 each coordinate Zn(2+). The C4-type zinc-finger motif lies at 33–55; it reads CPECGQVVYRKDLLSNASVCGNC.

The protein belongs to the AccD/PCCB family. In terms of assembly, acetyl-CoA carboxylase is a heterohexamer composed of biotin carboxyl carrier protein (AccB), biotin carboxylase (AccC) and two subunits each of ACCase subunit alpha (AccA) and ACCase subunit beta (AccD). It depends on Zn(2+) as a cofactor.

The protein resides in the cytoplasm. It carries out the reaction N(6)-carboxybiotinyl-L-lysyl-[protein] + acetyl-CoA = N(6)-biotinyl-L-lysyl-[protein] + malonyl-CoA. It functions in the pathway lipid metabolism; malonyl-CoA biosynthesis; malonyl-CoA from acetyl-CoA: step 1/1. Component of the acetyl coenzyme A carboxylase (ACC) complex. Biotin carboxylase (BC) catalyzes the carboxylation of biotin on its carrier protein (BCCP) and then the CO(2) group is transferred by the transcarboxylase to acetyl-CoA to form malonyl-CoA. This chain is Acetyl-coenzyme A carboxylase carboxyl transferase subunit beta, found in Synechococcus sp. (strain CC9311).